The following is a 66-amino-acid chain: Beta-toxin Cb2 (66 aa).

The 66-residue stretch at 1-66 (KEGYLVDLHT…VWPLPNKRCK (66 aa)) folds into the LCN-type CS-alpha/beta domain. Intrachain disulfides connect cysteine 12/cysteine 65, cysteine 16/cysteine 41, cysteine 25/cysteine 46, and cysteine 29/cysteine 48.

The protein belongs to the long (4 C-C) scorpion toxin superfamily. Sodium channel inhibitor family. Beta subfamily. As to expression, expressed by the venom gland.

Its subcellular location is the secreted. Beta toxins bind voltage-independently at site-4 of sodium channels (Nav) and reduces peak current and shifts the voltage of activation toward more negative potentials thereby affecting sodium channel activation and promoting spontaneous and repetitive firing. Has an inhibitory effect on voltage-gated sodium channel hNav1.6/SCN8A, affecting both the activation and inactivation processes. Also reduces the peak current of hNav1.5/SCN5A but does not shift its voltage of activation. This toxin is active against mammals and lethal to mice. The protein is Beta-toxin Cb2 of Centruroides baergi (Scorpion).